Consider the following 189-residue polypeptide: Glycerol-3-phosphate acyltransferase (189 aa).

A run of 5 helical transmembrane segments spans residues 1 to 21 (MFWL…AIVL), 50 to 70 (KLAI…VLLA), 77 to 97 (LHAQ…PLYF), 111 to 131 (MLMG…LLTF), and 151 to 171 (LLAW…VMIV).

The protein belongs to the PlsY family. Probably interacts with PlsX.

The protein localises to the cell inner membrane. It carries out the reaction an acyl phosphate + sn-glycerol 3-phosphate = a 1-acyl-sn-glycero-3-phosphate + phosphate. It functions in the pathway lipid metabolism; phospholipid metabolism. Functionally, catalyzes the transfer of an acyl group from acyl-phosphate (acyl-PO(4)) to glycerol-3-phosphate (G3P) to form lysophosphatidic acid (LPA). This enzyme utilizes acyl-phosphate as fatty acyl donor, but not acyl-CoA or acyl-ACP. This is Glycerol-3-phosphate acyltransferase from Pseudomonas putida (strain ATCC 700007 / DSM 6899 / JCM 31910 / BCRC 17059 / LMG 24140 / F1).